Here is a 374-residue protein sequence, read N- to C-terminus: Ribosomal RNA large subunit methyltransferase G (374 aa).

It belongs to the methyltransferase superfamily. RlmG family.

Its subcellular location is the cytoplasm. It catalyses the reaction guanosine(1835) in 23S rRNA + S-adenosyl-L-methionine = N(2)-methylguanosine(1835) in 23S rRNA + S-adenosyl-L-homocysteine + H(+). Specifically methylates the guanine in position 1835 (m2G1835) of 23S rRNA. This Pseudomonas putida (strain ATCC 47054 / DSM 6125 / CFBP 8728 / NCIMB 11950 / KT2440) protein is Ribosomal RNA large subunit methyltransferase G.